The chain runs to 155 residues: Endoribonuclease YbeY (155 aa).

The Zn(2+) site is built by His-114, His-118, and His-124.

Belongs to the endoribonuclease YbeY family. It depends on Zn(2+) as a cofactor.

The protein resides in the cytoplasm. Its function is as follows. Single strand-specific metallo-endoribonuclease involved in late-stage 70S ribosome quality control and in maturation of the 3' terminus of the 16S rRNA. In Escherichia coli O6:K15:H31 (strain 536 / UPEC), this protein is Endoribonuclease YbeY.